The chain runs to 150 residues: Large ribosomal subunit protein bL9 (150 aa).

The protein belongs to the bacterial ribosomal protein bL9 family.

In terms of biological role, binds to the 23S rRNA. The protein is Large ribosomal subunit protein bL9 of Leuconostoc mesenteroides subsp. mesenteroides (strain ATCC 8293 / DSM 20343 / BCRC 11652 / CCM 1803 / JCM 6124 / NCDO 523 / NBRC 100496 / NCIMB 8023 / NCTC 12954 / NRRL B-1118 / 37Y).